Reading from the N-terminus, the 86-residue chain is Actinorhodin polyketide synthase acyl carrier protein (86 aa).

Residues 4–82 form the Carrier domain; the sequence is LLTTDDLRRA…ELLDLINGAL (79 aa). Ser42 is modified (O-(pantetheine 4'-phosphoryl)serine).

In terms of processing, 4'-phosphopantetheine is transferred from CoA to a specific serine of the apo-ACP-like protein.

Its pathway is antibiotic biosynthesis; actinorhodin biosynthesis. Functionally, acyl carrier protein. The protein is Actinorhodin polyketide synthase acyl carrier protein of Streptomyces coelicolor (strain ATCC BAA-471 / A3(2) / M145).